We begin with the raw amino-acid sequence, 938 residues long: Isoleucine--tRNA ligase (938 aa).

Positions 58 to 68 (PYANGNIHIGH) match the 'HIGH' region motif. Glu-562 contributes to the L-isoleucyl-5'-AMP binding site. Residues 603-607 (KMSKS) carry the 'KMSKS' region motif. Lys-606 is an ATP binding site. Residues Cys-901, Cys-904, Cys-921, and Cys-924 each coordinate Zn(2+).

It belongs to the class-I aminoacyl-tRNA synthetase family. IleS type 1 subfamily. As to quaternary structure, monomer. Zn(2+) serves as cofactor.

The protein localises to the cytoplasm. The catalysed reaction is tRNA(Ile) + L-isoleucine + ATP = L-isoleucyl-tRNA(Ile) + AMP + diphosphate. Its function is as follows. Catalyzes the attachment of isoleucine to tRNA(Ile). As IleRS can inadvertently accommodate and process structurally similar amino acids such as valine, to avoid such errors it has two additional distinct tRNA(Ile)-dependent editing activities. One activity is designated as 'pretransfer' editing and involves the hydrolysis of activated Val-AMP. The other activity is designated 'posttransfer' editing and involves deacylation of mischarged Val-tRNA(Ile). In Actinobacillus pleuropneumoniae serotype 7 (strain AP76), this protein is Isoleucine--tRNA ligase.